Consider the following 756-residue polypeptide: Cellulose synthase catalytic subunit [UDP-forming] (756 aa).

4 consecutive transmembrane segments (helical) span residues 27-47 (ASYI…TVTL), 49-69 (NNEQ…VGRG), 106-126 (GILG…LFLS), and 167-187 (LTVL…VYIL). The interval 147-242 (DWPTVDIFIP…YILILDCDHI (96 aa)) is catalytic subdomain A. Asp189 is a catalytic residue. 2 residues coordinate substrate: Asp238 and Asp240. The tract at residues 319–379 (EAIESIGGFA…GQRMRWARGM (61 aa)) is catalytic subdomain B. Asp335 is an active-site residue. 5 helical membrane-spanning segments follow: residues 409–429 (FFFA…LFAG), 432–452 (IIAA…FHSI), 470–490 (VYET…LLFP), 517–537 (NIIF…ELIV), and 551–571 (LLNC…IAVG). The 106-residue stretch at 576–681 (QVRYNHRVEA…ERDIVRFVFG (106 aa)) folds into the PilZ domain. The tract at residues 721 to 756 (NSRPKKKPLALPVERREPTTIHSGQTQEGKISRAAS) is disordered. Positions 740–756 (TIHSGQTQEGKISRAAS) are enriched in polar residues.

It belongs to the glycosyltransferase 2 family. The cofactor is Mg(2+).

It is found in the cell inner membrane. The catalysed reaction is [(1-&gt;4)-beta-D-glucosyl](n) + UDP-alpha-D-glucose = [(1-&gt;4)-beta-D-glucosyl](n+1) + UDP + H(+). It functions in the pathway glycan metabolism; bacterial cellulose biosynthesis. With respect to regulation, activated by bis-(3'-5') cyclic diguanylic acid (c-di-GMP). Catalytic subunit of cellulose synthase. It polymerizes uridine 5'-diphosphate glucose to cellulose. The thick cellulosic mats generated by this enzyme probably provide a specialized protective environment to the bacterium. The sequence is that of Cellulose synthase catalytic subunit [UDP-forming] (bcsA) from Komagataeibacter sucrofermentans (strain ATCC 700178 / DSM 15973 / CECT 7291 / JCM 9730 / LMG 18788 / BPR 2001) (Acetobacter xylinus subsp. sucrofermentans).